The primary structure comprises 270 residues: Carboxy-terminal domain RNA polymerase II polypeptide A small phosphatase 2 (270 aa).

Phosphoserine is present on Ser-5. The region spanning 96–254 (QDQGRICVVI…LNLIPVFEEL (159 aa)) is the FCP1 homology domain. Asp-106 (4-aspartylphosphate intermediate) is an active-site residue. Mg(2+) is bound by residues Asp-106, Asp-108, and Asn-217. Asp-108 acts as the Proton donor in catalysis.

As to quaternary structure, monomer. Interacts with REST. It depends on Mg(2+) as a cofactor. In terms of tissue distribution, expression is restricted to non-neuronal tissues.

It is found in the nucleus. The catalysed reaction is O-phospho-L-seryl-[protein] + H2O = L-seryl-[protein] + phosphate. It catalyses the reaction O-phospho-L-threonyl-[protein] + H2O = L-threonyl-[protein] + phosphate. Functionally, preferentially catalyzes the dephosphorylation of 'Ser-5' within the tandem 7 residue repeats in the C-terminal domain (CTD) of the largest RNA polymerase II subunit POLR2A. Negatively regulates RNA polymerase II transcription, possibly by controlling the transition from initiation/capping to processive transcript elongation. Recruited by REST to neuronal genes that contain RE-1 elements, leading to neuronal gene silencing in non-neuronal cells. The polypeptide is Carboxy-terminal domain RNA polymerase II polypeptide A small phosphatase 2 (Ctdsp2) (Mus musculus (Mouse)).